Here is a 344-residue protein sequence, read N- to C-terminus: Anthranilate phosphoribosyltransferase 2 (344 aa).

5-phospho-alpha-D-ribose 1-diphosphate contacts are provided by residues glycine 81, 84–85 (GD), threonine 89, 91–94 (NIST), 109–117 (KHGNRALSS), and alanine 121. Glycine 81 lines the anthranilate pocket. Serine 93 contributes to the Mg(2+) binding site. Asparagine 112 is a binding site for anthranilate. Arginine 167 is a binding site for anthranilate. Mg(2+)-binding residues include aspartate 226 and glutamate 227.

Belongs to the anthranilate phosphoribosyltransferase family. As to quaternary structure, homodimer. Mg(2+) serves as cofactor.

It catalyses the reaction N-(5-phospho-beta-D-ribosyl)anthranilate + diphosphate = 5-phospho-alpha-D-ribose 1-diphosphate + anthranilate. It functions in the pathway amino-acid biosynthesis; L-tryptophan biosynthesis; L-tryptophan from chorismate: step 2/5. Catalyzes the transfer of the phosphoribosyl group of 5-phosphorylribose-1-pyrophosphate (PRPP) to anthranilate to yield N-(5'-phosphoribosyl)-anthranilate (PRA). This is Anthranilate phosphoribosyltransferase 2 from Ralstonia nicotianae (strain ATCC BAA-1114 / GMI1000) (Ralstonia solanacearum).